Reading from the N-terminus, the 101-residue chain is Small ribosomal subunit protein uS14 (101 aa).

Belongs to the universal ribosomal protein uS14 family. Part of the 30S ribosomal subunit. Contacts proteins S3 and S10.

In terms of biological role, binds 16S rRNA, required for the assembly of 30S particles and may also be responsible for determining the conformation of the 16S rRNA at the A site. The chain is Small ribosomal subunit protein uS14 from Polaromonas naphthalenivorans (strain CJ2).